The chain runs to 255 residues: 5'-nucleotidase SurE (255 aa).

Positions 8, 9, 40, and 93 each coordinate a divalent metal cation.

Belongs to the SurE nucleotidase family. A divalent metal cation serves as cofactor.

The protein resides in the cytoplasm. It catalyses the reaction a ribonucleoside 5'-phosphate + H2O = a ribonucleoside + phosphate. Functionally, nucleotidase that shows phosphatase activity on nucleoside 5'-monophosphates. This is 5'-nucleotidase SurE from Rhodopseudomonas palustris (strain BisB18).